The sequence spans 620 residues: Chaperone protein DnaK (620 aa).

Threonine 197 carries the phosphothreonine; by autocatalysis modification. The segment at 597–620 (AMANKNNAEQPKKKDDDVIDAEVE) is disordered.

The protein belongs to the heat shock protein 70 family.

Functionally, acts as a chaperone. This is Chaperone protein DnaK from Helicobacter pylori (strain G27).